Here is a 148-residue protein sequence, read N- to C-terminus: MGRFIFVSFGLLVVFLSLSGTGADQDCLPDWSSHERHCYKVINEYKTWEEAEQYCTEEANGGHLVSFHNRQEVAFVVKLGYTILKADVVWIGLRDFWRECQWEWSNGAKLNYKGWSDEPNCFIAYTVGNRWVRRKCSSTHPFVCKSPA.

The first 23 residues, 1 to 23 (MGRFIFVSFGLLVVFLSLSGTGA), serve as a signal peptide directing secretion. 3 disulfides stabilise this stretch: Cys27–Cys38, Cys55–Cys144, and Cys121–Cys136. In terms of domain architecture, C-type lectin spans 34 to 145 (HERHCYKVIN…CSSTHPFVCK (112 aa)).

It belongs to the snaclec family. Heterodimer; disulfide-linked. Expressed by the venom gland.

The protein localises to the secreted. In terms of biological role, interferes with one step of hemostasis (modulation of platelet aggregation, or coagulation cascade, for example). The sequence is that of Snaclec 7 from Echis pyramidum leakeyi (Leakey's carpet viper).